We begin with the raw amino-acid sequence, 750 residues long: Photosystem I P700 chlorophyll a apoprotein A1 (750 aa).

The next 8 membrane-spanning stretches (helical) occupy residues 70–93 (VFSAHFGQLSIIFLWLSGMYFHGA), 156–179 (LYCTAIGALVFAALMLFAGWFHYH), 195–219 (LNHHLAGLLGLGSLSWAGHQVHVSL), 291–309 (IAHHHLAIAIIFLIAGHMY), 346–369 (WHAQLALNLAMLGSLTIVVAHHMY), 385–411 (LSLFTHHMWIGGFLIVGAAAHAAIFMV), 433–455 (AIISHLNWACIFLGFHSFGLYIH), and 531–549 (FLVHHIHAFTIHVTVLILL). Residues C573 and C582 each coordinate [4Fe-4S] cluster. 2 consecutive transmembrane segments (helical) span residues 589–610 (HVFLGLFWMYNAISVVIFHFSW) and 664–686 (LSAYGLFFLGAHFVWAFSLMFLF). Chlorophyll a' is bound at residue H675. Chlorophyll a is bound by residues M683 and Y691. Phylloquinone is bound at residue W692. A helical membrane pass occupies residues 724–744 (AVGVTHYLLGGIATTWAFFLA).

It belongs to the PsaA/PsaB family. As to quaternary structure, the PsaA/B heterodimer binds the P700 chlorophyll special pair and subsequent electron acceptors. PSI consists of a core antenna complex that captures photons, and an electron transfer chain that converts photonic excitation into a charge separation. The eukaryotic PSI reaction center is composed of at least 11 subunits. P700 is a chlorophyll a/chlorophyll a' dimer, A0 is one or more chlorophyll a, A1 is one or both phylloquinones and FX is a shared 4Fe-4S iron-sulfur center. serves as cofactor.

The protein resides in the plastid. Its subcellular location is the chloroplast thylakoid membrane. It carries out the reaction reduced [plastocyanin] + hnu + oxidized [2Fe-2S]-[ferredoxin] = oxidized [plastocyanin] + reduced [2Fe-2S]-[ferredoxin]. Functionally, psaA and PsaB bind P700, the primary electron donor of photosystem I (PSI), as well as the electron acceptors A0, A1 and FX. PSI is a plastocyanin-ferredoxin oxidoreductase, converting photonic excitation into a charge separation, which transfers an electron from the donor P700 chlorophyll pair to the spectroscopically characterized acceptors A0, A1, FX, FA and FB in turn. Oxidized P700 is reduced on the lumenal side of the thylakoid membrane by plastocyanin. This chain is Photosystem I P700 chlorophyll a apoprotein A1, found in Amborella trichopoda.